Reading from the N-terminus, the 61-residue chain is DNA-directed RNA polymerase subunit 12-like protein (61 aa).

Residues cysteine 21, cysteine 24, cysteine 38, and cysteine 41 each contribute to the Zn(2+) site.

It belongs to the archaeal Rpo12/eukaryotic RPC10 RNA polymerase subunit family.

It localises to the nucleus. The polypeptide is DNA-directed RNA polymerase subunit 12-like protein (NRPB12L) (Arabidopsis thaliana (Mouse-ear cress)).